Consider the following 615-residue polypeptide: MLRRPKVSPELDPSTLSNYGDFIVHKTQLDLAVDFDKNRVSSCVSLNVTNRTNTHQVVLDSSYLVIHSASINGISTPFDVAERQTLGSKVTIKIPPEMKISELTITIESETTYECTALQFLPAEATDGGVGPYLFSQCQAIHARSLFPCFDTPAVKCPYEMSVTSPYPSVMSGRPLGVSGNMYRFSQPVPIPSYLVAVASGDIKSAPIGPRSSVYCEPLKLEVCQHEFQADMEHFLQAAESLVFKYEWERYDALVLPSSFPYGGMENPNITFVTPTLISGDRENVDVIAHELAHSWSGNLVTNCSWEHFWLNEGWTVYLERRILGKLHGNATRDFSAIIGWTDLENSIAAMGPSAERWSMLVHNLKDGSDPDDAFSTVPYEKGSTLLYHIETLIGQEKFDKFIPHYFHTFRYKSLDTYQFIDCLYSFFADFKSVLDTIDWESWLYKPGMPPVKPDFDTSMVDQCYQLADKWYHHSLKNKFHKFSSEDIKSFTANQSVVFLDTLIAFDKLDFKWKHHLDALNTMASVYQEYSKSTNAEVLFRWYVLQVTGHNQEYYSRLGEWLGTVGRMKFVRPGYVLLNKVDRSMALHYFEKFHNRYHAICKSMVRRDWDLIKTK.

Substrate is bound by residues 137 to 139 and 261 to 266; these read QCQ and PYGGME. Residue His290 participates in Zn(2+) binding. Glu291 (proton acceptor) is an active-site residue. The Zn(2+) site is built by His294 and Glu313. Tyr380 acts as the Proton donor in catalysis.

The protein belongs to the peptidase M1 family. Requires Zn(2+) as cofactor.

It localises to the cytoplasm. The protein resides in the nucleus. The catalysed reaction is an epoxide + H2O = an ethanediol. In terms of biological role, aminopeptidase that preferentially cleaves di- and tripeptides. Also has low epoxide hydrolase activity (in vitro). Can hydrolyze the epoxide leukotriene LTA(4) but it forms preferentially 5,6-dihydroxy-7,9,11,14-eicosatetraenoic acid rather than the cytokine leukotriene B(4) as the product compared to the homologous mammalian enzyme (in vitro). The chain is Leucine aminopeptidase 2-1 from Meyerozyma guilliermondii (strain ATCC 6260 / CBS 566 / DSM 6381 / JCM 1539 / NBRC 10279 / NRRL Y-324) (Yeast).